The sequence spans 228 residues: Glucose-induced degradation protein 8 homolog (228 aa).

One can recognise a LisH domain in the interval 29-61 (SKSDLNKLVMNYLVIEGYQEAAAKFQEESSTQT). The CTLH domain occupies 67–124 (SIADRMAIRSAIQCGDVEKGIEIVNDLNPEILDTNPQLYFHLQQQKLIELIRKGMTAE).

Belongs to the GID8 family.

It is found in the cytoplasm. Its subcellular location is the nucleus. In terms of biological role, core component of the CTLH E3 ubiquitin-protein ligase complex that mediates ubiquitination and subsequent proteasomal degradation of target proteins. Acts as a positive regulator of Wnt signaling pathway by promoting beta-catenin (CTNNB1) nuclear accumulation. This is Glucose-induced degradation protein 8 homolog from Dictyostelium discoideum (Social amoeba).